We begin with the raw amino-acid sequence, 348 residues long: NADH-ubiquinone oxidoreductase chain 2 (348 aa).

10 consecutive transmembrane segments (helical) span residues 3-23 (PTVLTIIISSMGLGTTLTFIG), 25-45 (HWLLVWMGLEINTLAIIPLMI), 59-79 (YFITQATASALLLFASVTNAW), 95-115 (ATLATAALALKIGLAPLHFWL), 149-171 (LNSNLLLLFGVTSTIVGGWGGLN), 178-198 (ILAYSSIANLGWMITILHYSP), 199-219 (SLTLLNLILYMFMTLTTFLLF), 242-262 (VIALMTLLSLGGLPPLSGFMP), 274-294 (SLIIPATIMALMALLSLFFYL), and 324-344 (LILLTSASISIFMLPMTPLIL).

The protein belongs to the complex I subunit 2 family.

It localises to the mitochondrion inner membrane. The catalysed reaction is a ubiquinone + NADH + 5 H(+)(in) = a ubiquinol + NAD(+) + 4 H(+)(out). In terms of biological role, core subunit of the mitochondrial membrane respiratory chain NADH dehydrogenase (Complex I) that is believed to belong to the minimal assembly required for catalysis. Complex I functions in the transfer of electrons from NADH to the respiratory chain. The immediate electron acceptor for the enzyme is believed to be ubiquinone. In Scyliorhinus canicula (Small-spotted catshark), this protein is NADH-ubiquinone oxidoreductase chain 2 (MT-ND2).